The sequence spans 1342 residues: ATP-dependent RNA helicase TDRD9 (1342 aa).

A compositionally biased stretch (basic and acidic residues) spans K31–Q63. The disordered stretch occupies residues K31–L81. The Helicase ATP-binding domain occupies V99–N265. ATP is bound at residue G112–T119. The DEAH box signature appears at D211–H214. Positions S317–G503 constitute a Helicase C-terminal domain. In terms of domain architecture, Tudor spans S901 to P962.

The protein belongs to the DEAD box helicase family. DEAH subfamily.

The protein localises to the cytoplasm. Its subcellular location is the nucleus. The catalysed reaction is ATP + H2O = ADP + phosphate + H(+). Its function is as follows. ATP-binding RNA helicase which plays a central role during spermatogenesis by repressing transposable elements and preventing their mobilization, which is essential for the germline integrity. Acts via the piRNA metabolic process, which mediates the repression of transposable elements during meiosis by forming complexes composed of piRNAs and Piwi proteins and governs the methylation and subsequent repression of transposons. Acts downstream of piRNA biogenesis: exclusively required for transposon silencing in the nucleus, suggesting that it acts as a nuclear effector in the nucleus together with piwil4. The sequence is that of ATP-dependent RNA helicase TDRD9 from Danio rerio (Zebrafish).